The chain runs to 247 residues: Segregation and condensation protein A (247 aa).

It belongs to the ScpA family. Component of a cohesin-like complex composed of ScpA, ScpB and the Smc homodimer, in which ScpA and ScpB bind to the head domain of Smc. The presence of the three proteins is required for the association of the complex with DNA.

It is found in the cytoplasm. Participates in chromosomal partition during cell division. May act via the formation of a condensin-like complex containing Smc and ScpB that pull DNA away from mid-cell into both cell halves. In Bacillus cereus (strain G9842), this protein is Segregation and condensation protein A.